Here is a 1060-residue protein sequence, read N- to C-terminus: RNA-binding protein 27 (1060 aa).

3 disordered regions span residues 80-143 (PLEP…DGKW), 160-278 (YDWR…PKRR), and 319-416 (PPPG…PPPL). Composition is skewed to basic and acidic residues over residues 84–102 (VKPE…KEEV) and 124–143 (SRSE…DGKW). Positions 165–185 (GRSKSRSKSRGLSRSRSRSRG) are enriched in basic residues. Residues 186-211 (RSKDRDPNRNVEHRERSKFKSERNDL) show a composition bias toward basic and acidic residues. Low complexity-rich tracts occupy residues 225–235 (SSEQYSSGAQS) and 255–268 (SWSN…SSNS). The segment at 273–301 (PPPKRRCRDYDERGFCVLGDLCQFDHGND) adopts a C3H1-type zinc-finger fold. 2 stretches are compositionally biased toward pro residues: residues 319 to 356 (PPPG…PGPG) and 371 to 384 (QPPP…PRPP). Over residues 387 to 402 (QSSLINSRDQPGTSAV) the composition is skewed to polar residues. Thr-447 bears the Phosphothreonine mark. Arg-455 is modified (omega-N-methylarginine). The disordered stretch occupies residues 572–594 (LTKKPWLGKQGNNNQSKPGFLRK). An RRM domain is found at 600 to 674 (TKLEVKKIPQ…RFIRVLWHRE (75 aa)). A disordered region spans residues 754–775 (HASTNQSDTSHLLNQTGGSSGE). Positions 755–770 (ASTNQSDTSHLLNQTG) are enriched in polar residues. A coiled-coil region spans residues 810–887 (VQEVLKKKQE…KDELKTSSTV (78 aa)). A Phosphoserine modification is found at Ser-928. The disordered stretch occupies residues 943 to 982 (GRGKTISSQGRGRGRGRGRGRGSLNHMVVDHRPKALPGGG). Residues Ser-1012 and Ser-1020 each carry the phosphoserine modification. Residues 1014–1060 (HKPKVPSISTETEEEEVKEEETETSDLFLHDDDDEDEDEYESRSWRR) form a disordered region. Composition is skewed to acidic residues over residues 1024-1037 (ETEE…ETET) and 1044-1053 (DDDDEDEDEY).

The protein resides in the cytoplasm. It localises to the nucleus speckle. May be involved in the turnover of nuclear polyadenylated (pA+) RNA. The polypeptide is RNA-binding protein 27 (Mus musculus (Mouse)).